The chain runs to 886 residues: Microsomal triglyceride transfer protein (886 aa).

The signal sequence occupies residues 1–24 (MLRLAGLLLCVTSFLSTSSLGANA). In terms of domain architecture, Vitellogenin spans 28 to 662 (LDNDRLYRYS…QSNNALLHGL (635 aa)). 2 disulfides stabilise this stretch: cysteine 174-cysteine 194 and cysteine 440-cysteine 445.

In terms of assembly, heterodimer; heterodimerizes with the protein disulfide isomerase. Interacts with apolipoprotein B.

It localises to the endoplasmic reticulum. Its function is as follows. Catalyzes the transport of triglyceride, cholesteryl ester, and phospholipid between phospholipid surfaces. Required for the secretion of plasma lipoproteins that contain apolipoprotein B. The chain is Microsomal triglyceride transfer protein from Megalobrama amblycephala (Chinese blunt snout bream).